Consider the following 317-residue polypeptide: N-acetylmuramoyl-L-alanine amidase XlyB (317 aa).

Residues 1–39 form the signal peptide; sequence MSIPVKKNLVSEAKYALKCPNAMSAEYITIHNTANDASA. The 103-residue stretch at 40–142 folds into the N-acetylmuramoyl-L-alanine amidase domain; the sequence is ANEISYMIGN…QDWSGKYCPH (103 aa). One can recognise a LysM domain in the interval 177 to 221; the sequence is SEYHVKKGDTLSGIAASHGASVKTLQSINHITDPNHIKIGQVIKL.

It belongs to the N-acetylmuramoyl-L-alanine amidase 2 family.

The protein localises to the secreted. The catalysed reaction is Hydrolyzes the link between N-acetylmuramoyl residues and L-amino acid residues in certain cell-wall glycopeptides.. Autolysins are involved in some important biological processes such as cell separation, cell-wall turnover, competence for genetic transformation, formation of the flagella and sporulation. This chain is N-acetylmuramoyl-L-alanine amidase XlyB (xlyB), found in Bacillus subtilis (strain 168).